Reading from the N-terminus, the 346-residue chain is Probable dolichyl-diphosphooligosaccharide--protein glycosyltransferase subunit 3B (346 aa).

The signal sequence occupies residues Met1 to Ala22. Over Ala23–Leu189 the chain is Lumenal. N-linked (GlcNAc...) asparagine glycosylation occurs at Asn108. Residues Leu190–Ile210 form a helical membrane-spanning segment. Residues Lys211–Leu225 lie on the Cytoplasmic side of the membrane. The chain crosses the membrane as a helical span at residues Trp226 to Ile246. The Lumenal segment spans residues Arg247–Gly277. A helical membrane pass occupies residues Phe278–Leu298. Residues Val299–Arg308 are Cytoplasmic-facing. A helical transmembrane segment spans residues Leu309–Asp329. Residues Asn330 to Arg346 lie on the Lumenal side of the membrane.

It belongs to the OST3/OST6 family. As to quaternary structure, component of the oligosaccharyltransferase (OST) complex.

Its subcellular location is the endoplasmic reticulum membrane. Its function is as follows. Subunit of the oligosaccharyl transferase (OST) complex that catalyzes the initial transfer of a defined glycan (Glc(3)Man(9)GlcNAc(2) in eukaryotes) from the lipid carrier dolichol-pyrophosphate to an asparagine residue within an Asn-X-Ser/Thr consensus motif in nascent polypeptide chains, the first step in protein N-glycosylation. N-glycosylation occurs cotranslationally and the complex associates with the Sec61 complex at the channel-forming translocon complex that mediates protein translocation across the endoplasmic reticulum (ER). All subunits are required for a maximal enzyme activity. In Arabidopsis thaliana (Mouse-ear cress), this protein is Probable dolichyl-diphosphooligosaccharide--protein glycosyltransferase subunit 3B (OST3B).